The sequence spans 65 residues: Alpha-conotoxin BnIA (65 aa).

A signal peptide spans 1 to 21 (MGMRMMFTMFLLVVLATTVVS). Positions 22–48 (FASDRASDGRNAAAKDKASDLVALTVK) are excised as a propeptide. 2 disulfides stabilise this stretch: cysteine 50–cysteine 56 and cysteine 51–cysteine 64. Residues 52 to 54 (SHP) are ser-Xaa-Pro motif, crucial for potent interaction with nAChR. A Cysteine amide modification is found at cysteine 64.

It belongs to the conotoxin A superfamily. In terms of tissue distribution, expressed by the venom duct.

It is found in the secreted. In terms of biological role, alpha-conotoxins act on postsynaptic membranes, they bind to the nicotinic acetylcholine receptors (nAChR) and thus inhibit them. This toxin inhibits acetylcholine-evoked currents reversibly in oocytes expressing the human alpha-7/CHRNA7 nAChR, and blocks nerve-evoked skeletal muscle contractions in isolated mouse neuromuscular preparations, but with a very low affinity. The protein is Alpha-conotoxin BnIA of Conus bandanus (Banded marble cone).